A 412-amino-acid polypeptide reads, in one-letter code: Putative competence-damage inducible protein (412 aa).

It belongs to the CinA family.

This Clostridium perfringens (strain SM101 / Type A) protein is Putative competence-damage inducible protein.